The primary structure comprises 533 residues: Multicopy suppressor of sporulation protein msa1 (533 aa).

The tract at residues 30 to 68 is disordered; the sequence is DIPPGSLSENDNSTTFIKPPLETASSSTPIPSSSSSGVL. Residues 36-45 show a composition bias toward polar residues; sequence LSENDNSTTF. Low complexity predominate over residues 54–68; that stretch reads SSSTPIPSSSSSGVL. One can recognise an RRM 1 domain in the interval 79 to 158; that stretch reads ACLFVASLNS…RHIRIERAKV (80 aa). Residues 237–292 form a disordered region; the sequence is YKKKGSSPFSPPNAHSRRRKSQGKDQSNTPVIKAPAPIPFSVSSDPPSTMGRSNSA. Over residues 277 to 292 the composition is skewed to polar residues; the sequence is SVSSDPPSTMGRSNSA. The region spanning 365-441 is the RRM 2 domain; that stretch reads YSIFVGQLDP…KPLRVEFRQL (77 aa).

The protein resides in the cytoplasm. Its function is as follows. Negative regulator of sexual differentiation. Acts by repressing the transcription of meiosis-inducing, ste11-regulated genes. This Schizosaccharomyces pombe (strain 972 / ATCC 24843) (Fission yeast) protein is Multicopy suppressor of sporulation protein msa1 (msa1).